The sequence spans 556 residues: Guard cell S-type anion channel SLAC1 (556 aa).

Positions 1–103 (MERKQSNAHS…GIINGGDGRK (103 aa)) are disordered. The Cytoplasmic portion of the chain corresponds to 1–189 (MERKQSNAHS…EQWPFLLRFP (189 aa)). Residues 10-36 (STFADINEVEDEAEQELQQQENNNNKR) are a coiled coil. The segment covering 25–34 (ELQQQENNNN) has biased composition (low complexity). S59 bears the Phosphoserine; by SRK2E mark. Residues 69 to 79 (RESRERDDKKS) show a composition bias toward basic and acidic residues. A phosphoserine; by SRK2E mark is found at S86, S113, and S120. Gly residues predominate over residues 86 to 99 (SFGGFESGGIINGG). The residue at position 146 (S146) is a Phosphoserine. The helical transmembrane segment at 190–210 (IGCFGICLGLSSQAVLWLALA) threads the bilayer. Residues 211–216 (KSPATN) are Extracellular-facing. A helical membrane pass occupies residues 217–237 (FLHITPLINLVVWLFSLVVLV). Topologically, residues 238-265 (SVSFTYILKCIFYFEAVKREYFHPVRVN) are cytoplasmic. The helical transmembrane segment at 266–286 (FFFAPWVVCMFLAISVPPMFS) threads the bilayer. At 287-295 (PNRKYLHPA) the chain is on the extracellular side. Residues 296–316 (IWCVFMGPYFFLELKIYGQWL) traverse the membrane as a helical segment. Residues 317–325 (SGGKRRLCK) are Cytoplasmic-facing. Residues 326 to 346 (VANPSSHLSVVGNFVGAILAS) form a helical membrane-spanning segment. At 347-352 (KVGWDE) the chain is on the extracellular side. Residues 353 to 373 (VAKFLWAVGFAHYLVVFVTLY) traverse the membrane as a helical segment. The Cytoplasmic portion of the chain corresponds to 374-388 (QRLPTSEALPKELHP). Residues 389 to 409 (VYSMFIAAPSAASIAWNTIYG) form a helical membrane-spanning segment. Topologically, residues 410–418 (QFDGCSRTC) are extracellular. A helical transmembrane segment spans residues 419 to 439 (FFIALFLYISLVARINFFTGF). K440 is a topological domain (cytoplasmic). A helical membrane pass occupies residues 441-463 (FSVAWWSYTFPMTTASVATIKYA). Topologically, residues 464–479 (EAVPGYPSRALALTLS) are extracellular. Residues 480-500 (FISTAMVCVLFVSTLLHAFVW) traverse the membrane as a helical segment. The Cytoplasmic portion of the chain corresponds to 501–556 (QTLFPNDLAIAITKRKLTREKKPFKRAYDLKRWTKQALAKKISAEKDFEAEEESHH).

This sequence belongs to the SLAC1 S-type anion channel family. In terms of assembly, homotrimer. Interacts with SRK2E, CPK6, CPK21, CPK23 and PP2CA. The channel is inactivated upon PP2CA and ABI1 binding. Interacts with KAT1, KAT2, KAT3/KC1 and AKT2. Interacts with GHR1. Post-translationally, phosphorylation by SRK2E, especially on Ser-120, activates the channel. Also phosphorylated and activated by CPK21 and CPK23. Abscisic acid (ABA) promotes phosphorylation. This phosphorylation is inhibited by ABI1. Phosphorylated and activated by GHR1; this phosphorylation is repressed by ABI2 but not ABI1. Phosphorylated by HT1 on N-terminus but not C-terminus. As to expression, preferentially expressed in guard cells. Also detected in the vascular strands close to the leaf margins.

It localises to the cell membrane. Activated by GHR1-mediated phosphorylation which is negatively regulated by ABI2 but not ABI1. Activation by SRK2E/OST1 and GHR1 is repressed by HT1. Functionally, slow, weak voltage-dependent S-type anion efflux channel involved in maintenance of anion homeostasis. Cl(-) efflux through SLAC1 causes membrane depolarization, which activates outward-rectifying K1 channels, leading to KCl and water efflux to reduce turgor further and cause stomatal closure, that reduces water loss and promotes leaf turgor. Essential for stomatal closure in response to CO(2), abscisic acid (ABA), ozone O(3), light/dark transitions, humidity change, calcium ions, hydrogen peroxide H(2)O(2), reactive oxygen species (ROS), and nitric oxide. Binds to the highly selective inward-rectifying potassium channels KAT1 and AKT2, and inhibits their activities. Functions as an essential negative regulator of inward potassium channels in guard cells. Essential for the efficient stomatal closure and opening in guard cells. Involved in the local and/or systemic stomatal responses (e.g. stomatal closure) to light stress. The polypeptide is Guard cell S-type anion channel SLAC1 (Arabidopsis thaliana (Mouse-ear cress)).